Reading from the N-terminus, the 273-residue chain is Cell division protein FtsQ (273 aa).

The Cytoplasmic portion of the chain corresponds to Met1–Leu10. The helical transmembrane segment at Ile11–Val31 threads the bilayer. Over Ala32 to Arg273 the chain is Periplasmic. Residues Phe37 to Gln110 form the POTRA domain.

The protein belongs to the FtsQ/DivIB family. FtsQ subfamily. As to quaternary structure, part of a complex composed of FtsB, FtsL and FtsQ.

The protein resides in the cell inner membrane. Essential cell division protein. May link together the upstream cell division proteins, which are predominantly cytoplasmic, with the downstream cell division proteins, which are predominantly periplasmic. May control correct divisome assembly. This is Cell division protein FtsQ from Bordetella pertussis (strain Tohama I / ATCC BAA-589 / NCTC 13251).